Consider the following 332-residue polypeptide: SLAM family member 6 (332 aa).

Residues Met-1–Ser-21 form the signal peptide. Residues Gln-22–Met-226 lie on the Extracellular side of the membrane. The Ig-like V-type domain maps to Gly-35–Ser-120. N-linked (GlcNAc...) asparagine glycans are attached at residues Asn-58, Asn-87, Asn-137, Asn-144, Asn-161, Asn-178, and Asn-203. An Ig-like C2-type domain is found at Asn-132 to Ser-209. 2 disulfides stabilise this stretch: Cys-147–Cys-214 and Cys-153–Cys-195. Residues Ile-227–Val-247 form a helical membrane-spanning segment. Topologically, residues Leu-248 to Val-331 are cytoplasmic. Tyr-274 is subject to Phosphotyrosine. Ser-278 is modified (phosphoserine). 2 consecutive short sequence motifs (ITSM) follow at residues Thr-283–Val-288 and Thr-307–Ile-312. Tyr-309 is modified (phosphotyrosine).

Homodimer. Interacts with PTN6. Interacts (phosphorylated) with PTN11. Interacts (phosphorylated on tyrosine residues) with SH2D1A/SAP and SH2D1B/EAT2; SH2D1A and SH2D1B can associate with the same SLAMF6 molecule; interaction with SH2D1B is mediated by ITSM 2. Post-translationally, phosphorylation in NK cells upon engagment by SLAMF6-expressing target cells is leading to receptor activation. As to expression, expressed by all (resting and activated) natural killer cells (NK), T- and B-lymphocytes. Increased surface expression on T-cells of systemic lupus erythematosus (SLE) patients.

The protein localises to the cell membrane. Functionally, self-ligand receptor of the signaling lymphocytic activation molecule (SLAM) family. SLAM receptors triggered by homo- or heterotypic cell-cell interactions are modulating the activation and differentiation of a wide variety of immune cells and thus are involved in the regulation and interconnection of both innate and adaptive immune response. Activities are controlled by presence or absence of small cytoplasmic adapter proteins, SH2D1A/SAP and/or SH2D1B/EAT-2. Triggers cytolytic activity only in natural killer cells (NK) expressing high surface densities of natural cytotoxicity receptors. Positive signaling in NK cells implicates phosphorylation of VAV1. NK cell activation seems to depend on SH2D1B and not on SH2D1A. In conjunction with SLAMF1 controls the transition between positive selection and the subsequent expansion and differentiation of the thymocytic natural killer T (NKT) cell lineage. Promotes T-cell differentiation into a helper T-cell Th17 phenotype leading to increased IL-17 secretion; the costimulatory activity requires SH2D1A. Promotes recruitment of RORC to the IL-17 promoter. In conjunction with SLAMF1 and CD84/SLAMF5 may be a negative regulator of the humoral immune response. In the absence of SH2D1A/SAP can transmit negative signals to CD4(+) T-cells and NKT cells. Negatively regulates germinal center formation by inhibiting T-cell:B-cell adhesion; the function probably implicates increased association with PTPN6/SHP-1 via ITSMs in absence of SH2D1A/SAP. However, reported to be involved in maintaining B-cell tolerance in germinal centers and in preventing autoimmunity. The polypeptide is SLAM family member 6 (SLAMF6) (Homo sapiens (Human)).